The sequence spans 302 residues: Oxygen-dependent coproporphyrinogen-III oxidase (302 aa).

Residue Ser94 coordinates substrate. A divalent metal cation-binding residues include His98 and His108. The active-site Proton donor is His108. Residue 110-112 coordinates substrate; that stretch reads NVR. A divalent metal cation contacts are provided by His147 and His177. Positions 242 to 277 are important for dimerization; the sequence is YVEFNLVWDRGTLFGLQSGGRTESILMSMPPLARWE. 260–262 provides a ligand contact to substrate; sequence GGR.

This sequence belongs to the aerobic coproporphyrinogen-III oxidase family. In terms of assembly, homodimer. Requires a divalent metal cation as cofactor.

It is found in the cytoplasm. It catalyses the reaction coproporphyrinogen III + O2 + 2 H(+) = protoporphyrinogen IX + 2 CO2 + 2 H2O. The protein operates within porphyrin-containing compound metabolism; protoporphyrin-IX biosynthesis; protoporphyrinogen-IX from coproporphyrinogen-III (O2 route): step 1/1. Functionally, involved in the heme biosynthesis. Catalyzes the aerobic oxidative decarboxylation of propionate groups of rings A and B of coproporphyrinogen-III to yield the vinyl groups in protoporphyrinogen-IX. This Photorhabdus laumondii subsp. laumondii (strain DSM 15139 / CIP 105565 / TT01) (Photorhabdus luminescens subsp. laumondii) protein is Oxygen-dependent coproporphyrinogen-III oxidase.